Here is a 491-residue protein sequence, read N- to C-terminus: Nickel-binding protein NikA (491 aa).

A signal peptide spans 1–18 (MKFKRLATIFSAVLVLSG). The N-palmitoyl cysteine moiety is linked to residue cysteine 19. A lipid anchor (S-diacylglycerol cysteine) is attached at cysteine 19.

The protein belongs to the bacterial solute-binding protein 5 family. The complex is composed of two ATP-binding proteins (NikD and NikE), two transmembrane proteins (NikB and NikC) and a solute-binding protein (NikA).

The protein localises to the cell membrane. Part of the ABC transporter complex NikABCDE (Opp2) involved in nickel import. Binds nickel and transfers it to the membrane-bound permease. Required for full urease activity and plays a significant role in the virulence of S.aureus during urinary tract infection (UTI). May bind nickel via a nickel-chelator. In Staphylococcus aureus (strain NCTC 8325 / PS 47), this protein is Nickel-binding protein NikA.